We begin with the raw amino-acid sequence, 266 residues long: Chymotrypsin-like elastase family member 1 (266 aa).

Residues 1 to 16 form the signal peptide; sequence MLRFLVLATLVLYGHS. The propeptide at 17–26 is activation peptide; sequence TRDFPETNAR. Residues 27–264 enclose the Peptidase S1 domain; sequence VVGGTEARKN…YISWINNVIA (238 aa). A disulfide bond links Cys-56 and Cys-72. His-71 acts as the Charge relay system in catalysis. Glu-85, Asn-87, Gln-90, and Glu-95 together coordinate Ca(2+). A glycan (N-linked (GlcNAc...) asparagine) is linked at Asn-87. Residue Asp-119 is the Charge relay system of the active site. Disulfide bonds link Cys-153–Cys-220, Cys-184–Cys-200, and Cys-210–Cys-240. The Charge relay system role is filled by Ser-214. Asn-241 carries an N-linked (GlcNAc...) asparagine glycan.

The protein belongs to the peptidase S1 family. Elastase subfamily. It depends on Ca(2+) as a cofactor.

Its subcellular location is the secreted. The enzyme catalyses Hydrolysis of proteins, including elastin. Preferential cleavage: Ala-|-Xaa.. In terms of biological role, serine proteases that hydrolyze many proteins in addition to elastin. The chain is Chymotrypsin-like elastase family member 1 (CELA1) from Felis catus (Cat).